Consider the following 330-residue polypeptide: Sulfate/thiosulfate import ATP-binding protein CysA (330 aa).

One can recognise an ABC transporter domain in the interval 3 to 237 (IEIRNINKQF…PASEFVYHFL (235 aa)). An ATP-binding site is contributed by 35-42 (GPSGCGKT).

The protein belongs to the ABC transporter superfamily. Sulfate/tungstate importer (TC 3.A.1.6) family. In terms of assembly, the complex is composed of two ATP-binding proteins (CysA), two transmembrane proteins (CysT and CysW) and a solute-binding protein (CysP).

It localises to the cell inner membrane. It carries out the reaction sulfate(out) + ATP + H2O = sulfate(in) + ADP + phosphate + H(+). The enzyme catalyses thiosulfate(out) + ATP + H2O = thiosulfate(in) + ADP + phosphate + H(+). Part of the ABC transporter complex CysAWTP involved in sulfate/thiosulfate import. Responsible for energy coupling to the transport system. In Pectobacterium atrosepticum (strain SCRI 1043 / ATCC BAA-672) (Erwinia carotovora subsp. atroseptica), this protein is Sulfate/thiosulfate import ATP-binding protein CysA.